A 261-amino-acid polypeptide reads, in one-letter code: Kallikrein-1E2 (261 aa).

The signal sequence occupies residues 1-17 (MWFLVLCLDLSLGETGA). The propeptide at 18–24 (LPPIQSR) is activation peptide. Positions 25–258 (IIGGWECEKH…HLKWIKETIE (234 aa)) constitute a Peptidase S1 domain. 5 disulfides stabilise this stretch: cysteine 31–cysteine 173, cysteine 50–cysteine 66, cysteine 152–cysteine 219, cysteine 184–cysteine 198, and cysteine 209–cysteine 234. Histidine 65 acts as the Charge relay system in catalysis. N-linked (GlcNAc...) asparagine glycosylation is present at asparagine 79. The Charge relay system role is filled by aspartate 120. The active-site Charge relay system is serine 213.

Belongs to the peptidase S1 family. Kallikrein subfamily. Detected in prostate and semen.

It localises to the secreted. The enzyme catalyses Preferential cleavage of Arg-|-Xaa bonds in small molecule substrates. Highly selective action to release kallidin (lysyl-bradykinin) from kininogen involves hydrolysis of Met-|-Xaa or Leu-|-Xaa.. Functionally, glandular kallikreins cleave Met-Lys and Arg-Ser bonds in kininogen to release Lys-bradykinin. The sequence is that of Kallikrein-1E2 (KLK1E2) from Equus caballus (Horse).